The chain runs to 37 residues: Large ribosomal subunit protein bL36 (37 aa).

It belongs to the bacterial ribosomal protein bL36 family.

This Solibacter usitatus (strain Ellin6076) protein is Large ribosomal subunit protein bL36.